Reading from the N-terminus, the 445-residue chain is Phosphatidate cytidylyltransferase 2 (445 aa).

Residues 1 to 39 (MTELRQRVAREPEAPPEDKESESEAKADGETASDSESRV) show a composition bias toward basic and acidic residues. Residues 1–52 (MTELRQRVAREPEAPPEDKESESEAKADGETASDSESRVEAVTQPPSADDTP) are disordered. Residue Ser21 is modified to Phosphoserine. Thr31 is modified (phosphothreonine). Phosphoserine occurs at positions 33, 35, and 37. The residue at position 51 (Thr51) is a Phosphothreonine. Transmembrane regions (helical) follow at residues 79–99 (MIAFFFIIIYLGPMVLMMIVM), 132–152 (FLLCVNYFFYGETVTDYFFTL), 166–186 (HRFISFTLYLTGFCMFVLSLV), 213–233 (LVIHNLFEGMIWFIVPISCVI), 262–282 (GFIGGFFATVVFGLLLSYVMS), and 340–360 (IALSTFASLIGPFGGFFASGF).

It belongs to the CDS family. Homodimer.

The protein localises to the endoplasmic reticulum membrane. The enzyme catalyses a 1,2-diacyl-sn-glycero-3-phosphate + CTP + H(+) = a CDP-1,2-diacyl-sn-glycerol + diphosphate. It carries out the reaction 1-octadecanoyl-2-(5Z,8Z,11Z,14Z-eicosatetraenoyl)-sn-glycero-3-phosphate + CTP + H(+) = 1-octadecanoyl-2-(5Z,8Z,11Z,14Z-eicosatetraenoyl)-sn-glycero-3-cytidine-5'-diphosphate + diphosphate. It catalyses the reaction 1-octadecanoyl-2-(9Z,12Z-octadecadienoyl)-sn-glycero-3-phosphate + CTP + H(+) = 1-octadecanoyl-2-(9Z,12Z-octadecadienoyl)-sn-glycero-3-cytidine-5'-diphosphate + diphosphate. The catalysed reaction is 1-hexadecanoyl-2-(5Z,8Z,11Z,14Z-eicosatetraenoyl)-sn-glycero-3-phosphate + CTP + H(+) = 1-hexadecanoyl-2-(5Z,8Z,11Z,14Z-eicosatetraenoyl)-sn-glycero-3-cytidine-5'-diphosphate + diphosphate. The enzyme catalyses 1,2-di-(5Z,8Z,11Z,14Z)-eicosatetraenoyl-sn-glycero-3-phosphate + CTP + H(+) = 1,2-di-(5Z,8Z,11Z,14Z-eicosatetraenoyl)-sn-glycero-3-cytidine-5'-diphosphate + diphosphate. It carries out the reaction 1-octadecanoyl-2-(9Z-octadecenoyl)-sn-glycero-3-phosphate + CTP + H(+) = 1-octadecanoyl-2-(9Z-octadecenoyl)-sn-glycero-3-cytidine-5'-diphosphate + diphosphate. It catalyses the reaction 1-octadecanoyl-2-(4Z,7Z,10Z,13Z,16Z,19Z-docosahexaenoyl)-sn-glycero-3-phosphate + CTP + H(+) = 1-octadecanoyl-2-(4Z,7Z,10Z,13Z,16Z,19Z-docosahexaenoyl)-sn-glycero-3-cytidine-5'-diphosphate + diphosphate. The catalysed reaction is 1,2-di-(9Z,12Z-octadecadienoyl)-sn-glycero-3-phosphate + CTP + H(+) = 1,2-di-(9Z,12Z-octadecadienoyl)-sn-glycero-3-cytidine-5'-diphosphate + diphosphate. The enzyme catalyses 1,2-di-(9Z-octadecenoyl)-sn-glycero-3-phosphate + CTP + H(+) = 1,2-di-(9Z-octadecenoyl)-sn-glycero-3-cytidine-5'-diphosphate + diphosphate. It functions in the pathway phospholipid metabolism; CDP-diacylglycerol biosynthesis; CDP-diacylglycerol from sn-glycerol 3-phosphate: step 3/3. Its function is as follows. Catalyzes the conversion of phosphatidic acid (PA) to CDP-diacylglycerol (CDP-DAG), an essential intermediate in the synthesis of phosphatidylglycerol, cardiolipin and phosphatidylinositol. Exhibits specificity for the nature of the acyl chains at the sn-1 and sn-2 positions in the substrate, PA and the preferred acyl chain composition is 1-stearoyl-2-arachidonoyl-sn-phosphatidic acid. Plays an important role in regulating the growth and maturation of lipid droplets which are storage organelles at the center of lipid and energy homeostasis. This chain is Phosphatidate cytidylyltransferase 2 (CDS2), found in Bos taurus (Bovine).